Reading from the N-terminus, the 336-residue chain is Inositol 2-dehydrogenase (336 aa).

This sequence belongs to the Gfo/Idh/MocA family. Homotetramer.

It catalyses the reaction myo-inositol + NAD(+) = scyllo-inosose + NADH + H(+). Functionally, involved in the oxidation of myo-inositol (MI) to 2-keto-myo-inositol (2KMI or 2-inosose). In Agrobacterium fabrum (strain C58 / ATCC 33970) (Agrobacterium tumefaciens (strain C58)), this protein is Inositol 2-dehydrogenase.